A 378-amino-acid polypeptide reads, in one-letter code: GDP-mannose-dependent alpha-mannosyltransferase (378 aa).

This sequence belongs to the glycosyltransferase group 1 family. Glycosyltransferase 4 subfamily.

It participates in phospholipid metabolism; phosphatidylinositol metabolism. In terms of biological role, catalyzes the addition of a mannose residue from GDP-D-mannose to GlcAGroAc2 to generate 1,2-di-O-C16/C18:1-(alpha-D-mannopyranosyl)-(1-4)-(alpha-D-glucopyranosyluronic acid)-(1-3)-glycerol(ManGlcAGroAc2). The chain is GDP-mannose-dependent alpha-mannosyltransferase (mgtA) from Mycobacterium tuberculosis (strain CDC 1551 / Oshkosh).